Consider the following 1087-residue polypeptide: Exportin-7-A (1087 aa).

The 67-residue stretch at 30–96 (AEKALVEFTN…RNYVLTYLAT (67 aa)) folds into the Importin N-terminal domain.

Belongs to the exportin family. As to expression, expressed in oocytes (at protein level).

It is found in the cytoplasm. It localises to the nucleus. Mediates the nuclear export of proteins (cargos) with broad substrate specificity. The sequence is that of Exportin-7-A (xpo7-a) from Xenopus laevis (African clawed frog).